Reading from the N-terminus, the 140-residue chain is Putative membrane protein ORF7 (140 aa).

A helical transmembrane segment spans residues 44–60; the sequence is TCAVSFFALFMLIIWVL. Positions 66–118 are disordered; it reads PEGSTTRGTDAHTQTEGSTTRGTDAHTQTEGSRDQGSMTPEADDLTRPPLGHG. A compositionally biased stretch (polar residues) spans 68–103; the sequence is GSTTRGTDAHTQTEGSTTRGTDAHTQTEGSRDQGSM.

The protein localises to the membrane. This is Putative membrane protein ORF7 (ORF7) from Ictalurid herpesvirus 1 (strain Auburn) (IcHV-1).